Reading from the N-terminus, the 264-residue chain is Triosephosphate isomerase (264 aa).

13–15 (NWK) is a substrate binding site. H106 acts as the Electrophile in catalysis. Residue E179 is the Proton acceptor of the active site. Substrate contacts are provided by residues G185, S223, and 244–245 (GG).

Belongs to the triosephosphate isomerase family. In terms of assembly, homodimer.

The protein resides in the cytoplasm. The catalysed reaction is D-glyceraldehyde 3-phosphate = dihydroxyacetone phosphate. The protein operates within carbohydrate biosynthesis; gluconeogenesis. It functions in the pathway carbohydrate degradation; glycolysis; D-glyceraldehyde 3-phosphate from glycerone phosphate: step 1/1. In terms of biological role, involved in the gluconeogenesis. Catalyzes stereospecifically the conversion of dihydroxyacetone phosphate (DHAP) to D-glyceraldehyde-3-phosphate (G3P). The chain is Triosephosphate isomerase from Acinetobacter baumannii (strain SDF).